A 345-amino-acid polypeptide reads, in one-letter code: S-adenosylmethionine:tRNA ribosyltransferase-isomerase (345 aa).

This sequence belongs to the QueA family. In terms of assembly, monomer.

It localises to the cytoplasm. It catalyses the reaction 7-aminomethyl-7-carbaguanosine(34) in tRNA + S-adenosyl-L-methionine = epoxyqueuosine(34) in tRNA + adenine + L-methionine + 2 H(+). It functions in the pathway tRNA modification; tRNA-queuosine biosynthesis. Its function is as follows. Transfers and isomerizes the ribose moiety from AdoMet to the 7-aminomethyl group of 7-deazaguanine (preQ1-tRNA) to give epoxyqueuosine (oQ-tRNA). The sequence is that of S-adenosylmethionine:tRNA ribosyltransferase-isomerase from Acidiphilium cryptum (strain JF-5).